Reading from the N-terminus, the 2388-residue chain is CCR4-NOT transcription complex subunit 1 (2388 aa).

4 short sequence motifs (LXXLL) span residues 153–157 (LPDLL), 181–185 (LHLLL), 223–227 (LAPLL), and 570–574 (LSMLL). 2 disordered regions span residues 1012-1035 (SQAQ…TTPA) and 1300-1320 (EQLS…PMTS). A compositionally biased stretch (low complexity) spans 1016 to 1035 (TPAKPASSSAVTTPTTTTPA). Positions 1076 to 1617 (EPPENVQEKI…QPMKQQAWAT (542 aa)) are interaction with CCR4-NOT complex catalytic subunits. A compositionally biased stretch (basic and acidic residues) spans 1300–1313 (EQLSAPKKDVKQPE). 3 consecutive short sequence motifs (LXXLL) follow at residues 1651 to 1655 (LRSLL), 1954 to 1958 (LIALL), and 2108 to 2112 (LRVLL).

This sequence belongs to the CNOT1 family. As to quaternary structure, component of the CCR4-NOT complex.

Its subcellular location is the cytoplasm. It localises to the nucleus. In terms of biological role, scaffolding component of the CCR4-NOT complex which is one of the major cellular mRNA deadenylases and is linked to various cellular processes including bulk mRNA degradation, miRNA-mediated repression, translational repression during translational initiation and general transcription regulation. Additional complex functions may be a consequence of its influence on mRNA expression. Its scaffolding function implies its interaction with the catalytic complex module and diverse RNA-binding proteins mediating the complex recruitment to selected mRNA 3'UTRs. Acts as a transcriptional repressor. Represses the ligand-dependent transcriptional activation by nuclear receptors. This chain is CCR4-NOT transcription complex subunit 1 (cnot1), found in Xenopus tropicalis (Western clawed frog).